A 25-amino-acid polypeptide reads, in one-letter code: Hemocyanin subunit 2 (25 aa).

The protein belongs to the tyrosinase family. Hemocyanin subfamily. Hemolymph.

Its subcellular location is the secreted. The protein localises to the extracellular space. In terms of biological role, hemocyanins are copper-containing oxygen carriers occurring freely dissolved in the hemolymph of many mollusks and arthropods. The protein is Hemocyanin subunit 2 of Carcinus maenas (Common shore crab).